A 313-amino-acid polypeptide reads, in one-letter code: Serine/threonine-protein phosphatase PP2A-3 catalytic subunit (313 aa).

Positions 61, 63, 89, and 121 each coordinate Mn(2+). His-122 acts as the Proton donor in catalysis. Mn(2+)-binding residues include His-171 and His-245. Residue Leu-313 is modified to Leucine methyl ester.

The protein belongs to the PPP phosphatase family. PP-2A subfamily. In terms of assembly, PP2A consists of a common heterodimeric core enzyme, composed of a 36 kDa catalytic subunit (subunit C) and a 65 kDa constant regulatory subunit (subunit A), that associates with a variety of regulatory subunits such as subunits B (the R2/B/PR55/B55, R3/B''/PR72/PR130/PR59 and R5/B'/B56 families). Interacts with ACR4. Interacts with TAP46. Interacts with SIC/RON3. Mn(2+) is required as a cofactor. In terms of processing, reversibly methyl esterified on Leu-313 by leucine carboxyl methyltransferase 1 (LCMT1) and pectin methylesterase 1 (PME1). Carboxyl methylation influences the affinity of the catalytic subunit for the different regulatory subunits, thereby modulating the PP2A holoenzyme's substrate specificity, enzyme activity and cellular localization. Post-translationally, phosphorylation of either threonine (by autophosphorylation-activated protein kinase) or tyrosine results in inactivation of the phosphatase. Auto-dephosphorylation has been suggested as a mechanism for reactivation.

It is found in the cytoplasm. It catalyses the reaction O-phospho-L-seryl-[protein] + H2O = L-seryl-[protein] + phosphate. The catalysed reaction is O-phospho-L-threonyl-[protein] + H2O = L-threonyl-[protein] + phosphate. Its function is as follows. Functions redundantly with PP2A4, and is involved in establishing auxin gradients, apical-basal axis of polarity and root and shoot apical meristem during embryogenesis. May dephosphorylate PIN1 and regulate its subcellular distribution for polar auxin transport. Involved in the regulation of formative cell division in roots by dephosphorylating ACR4 protein kinase. The protein is Serine/threonine-protein phosphatase PP2A-3 catalytic subunit of Arabidopsis thaliana (Mouse-ear cress).